The sequence spans 116 residues: Phosphoribosyl-AMP cyclohydrolase (116 aa).

Residue aspartate 80 participates in Mg(2+) binding. A Zn(2+)-binding site is contributed by cysteine 81. Residues aspartate 82 and aspartate 84 each coordinate Mg(2+). Zn(2+)-binding residues include cysteine 98 and cysteine 105.

Belongs to the PRA-CH family. As to quaternary structure, homodimer. It depends on Mg(2+) as a cofactor. The cofactor is Zn(2+).

Its subcellular location is the cytoplasm. It catalyses the reaction 1-(5-phospho-beta-D-ribosyl)-5'-AMP + H2O = 1-(5-phospho-beta-D-ribosyl)-5-[(5-phospho-beta-D-ribosylamino)methylideneamino]imidazole-4-carboxamide. Its pathway is amino-acid biosynthesis; L-histidine biosynthesis; L-histidine from 5-phospho-alpha-D-ribose 1-diphosphate: step 3/9. Functionally, catalyzes the hydrolysis of the adenine ring of phosphoribosyl-AMP. In Trichormus variabilis (strain ATCC 29413 / PCC 7937) (Anabaena variabilis), this protein is Phosphoribosyl-AMP cyclohydrolase.